The following is a 376-amino-acid chain: Alcohol dehydrogenase class-3 (376 aa).

Ser1 is modified (N-acetylserine). The Zn(2+) site is built by Cys47, His69, Cys99, Cys102, Cys105, Cys113, and Cys176.

The protein belongs to the zinc-containing alcohol dehydrogenase family. Class-III subfamily. In terms of assembly, homodimer. Zn(2+) serves as cofactor. Liver and gut.

Its subcellular location is the cytoplasm. It catalyses the reaction a primary alcohol + NAD(+) = an aldehyde + NADH + H(+). The catalysed reaction is a secondary alcohol + NAD(+) = a ketone + NADH + H(+). The enzyme catalyses S-(hydroxymethyl)glutathione + NADP(+) = S-formylglutathione + NADPH + H(+). It carries out the reaction S-(hydroxymethyl)glutathione + NAD(+) = S-formylglutathione + NADH + H(+). It catalyses the reaction S-nitrosoglutathione + NADH + H(+) = S-(hydroxysulfenamide)glutathione + NAD(+). In terms of biological role, class-III ADH is remarkably ineffective in oxidizing ethanol, but it readily catalyzes the oxidation of long-chain primary alcohols and the oxidation of S-(hydroxymethyl) glutathione. Also acts as a S-nitroso-glutathione reductase by catalyzing the NADH-dependent reduction of S-nitrosoglutathione, thereby regulating protein S-nitrosylation. This is Alcohol dehydrogenase class-3 from Myxine glutinosa (Atlantic hagfish).